The sequence spans 360 residues: Isocitrate dehydrogenase [NAD] regulatory subunit B, mitochondrial (360 aa).

The N-terminal 113 residues, 1–113 (MLGRLRTVVK…MELRKALDLY (113 aa)), are a transit peptide targeting the mitochondrion. Residues S101, N103, R107, and R140 each coordinate substrate. Residue D227 coordinates Mg(2+). Residues 284–290 (HHVAADI) and N297 each bind NADP(+).

It belongs to the isocitrate and isopropylmalate dehydrogenases family. In terms of assembly, heterooligomer of catalytic and regulatory subunits. The cofactor is Mg(2+). Mn(2+) serves as cofactor.

Its subcellular location is the mitochondrion. It carries out the reaction D-threo-isocitrate + NAD(+) = 2-oxoglutarate + CO2 + NADH. Performs an essential role in the oxidative function of the citric acid cycle. The sequence is that of Isocitrate dehydrogenase [NAD] regulatory subunit B, mitochondrial (idhB) from Dictyostelium discoideum (Social amoeba).